A 118-amino-acid polypeptide reads, in one-letter code: Late cornified envelope protein 1C (118 aa).

The span at 1–10 (MSCQQSQQQC) shows a compositional bias: low complexity. 2 disordered regions span residues 1–23 (MSCQ…CPPK) and 87–118 (CHRP…GGCC). Residues 11–23 (QPPPKCTPKCPPK) are compositionally biased toward pro residues. A compositionally biased stretch (low complexity) spans 90-103 (PQSSGCCSQPSGGS). Residues 104–118 (SCCGGGSGQHSGGCC) show a composition bias toward gly residues.

The protein belongs to the LCE family. Interacts with CYSRT1. In terms of tissue distribution, skin-specific. Expression was readily detected in adult trunk skin, adult arm skin, fetal skin, penal skin, vulva, esophagus and tongue. Not expressed in the cervix, rectum, lung, colon, or placenta.

Precursors of the cornified envelope of the stratum corneum. The polypeptide is Late cornified envelope protein 1C (LCE1C) (Homo sapiens (Human)).